Consider the following 69-residue polypeptide: Large ribosomal subunit protein uL29 (69 aa).

The protein belongs to the universal ribosomal protein uL29 family.

The polypeptide is Large ribosomal subunit protein uL29 (Thermoanaerobacter pseudethanolicus (strain ATCC 33223 / 39E) (Clostridium thermohydrosulfuricum)).